A 178-amino-acid polypeptide reads, in one-letter code: ATP synthase subunit delta (178 aa).

It belongs to the ATPase delta chain family. As to quaternary structure, F-type ATPases have 2 components, F(1) - the catalytic core - and F(0) - the membrane proton channel. F(1) has five subunits: alpha(3), beta(3), gamma(1), delta(1), epsilon(1). F(0) has three main subunits: a(1), b(2) and c(10-14). The alpha and beta chains form an alternating ring which encloses part of the gamma chain. F(1) is attached to F(0) by a central stalk formed by the gamma and epsilon chains, while a peripheral stalk is formed by the delta and b chains.

It localises to the cell membrane. In terms of biological role, f(1)F(0) ATP synthase produces ATP from ADP in the presence of a proton or sodium gradient. F-type ATPases consist of two structural domains, F(1) containing the extramembraneous catalytic core and F(0) containing the membrane proton channel, linked together by a central stalk and a peripheral stalk. During catalysis, ATP synthesis in the catalytic domain of F(1) is coupled via a rotary mechanism of the central stalk subunits to proton translocation. Functionally, this protein is part of the stalk that links CF(0) to CF(1). It either transmits conformational changes from CF(0) to CF(1) or is implicated in proton conduction. The polypeptide is ATP synthase subunit delta (Streptococcus pyogenes serotype M1).